Consider the following 82-residue polypeptide: Small ribosomal subunit protein uS17 (82 aa).

The protein belongs to the universal ribosomal protein uS17 family. As to quaternary structure, part of the 30S ribosomal subunit.

Functionally, one of the primary rRNA binding proteins, it binds specifically to the 5'-end of 16S ribosomal RNA. In Bradyrhizobium sp. (strain BTAi1 / ATCC BAA-1182), this protein is Small ribosomal subunit protein uS17.